We begin with the raw amino-acid sequence, 130 residues long: Small ribosomal subunit protein uS11 (130 aa).

This sequence belongs to the universal ribosomal protein uS11 family. Part of the 30S ribosomal subunit. Interacts with proteins S7 and S18. Binds to IF-3.

Located on the platform of the 30S subunit, it bridges several disparate RNA helices of the 16S rRNA. Forms part of the Shine-Dalgarno cleft in the 70S ribosome. The protein is Small ribosomal subunit protein uS11 of Shewanella frigidimarina (strain NCIMB 400).